Consider the following 117-residue polypeptide: Large ribosomal subunit protein bL19 (117 aa).

It belongs to the bacterial ribosomal protein bL19 family.

Functionally, this protein is located at the 30S-50S ribosomal subunit interface and may play a role in the structure and function of the aminoacyl-tRNA binding site. This Vibrio parahaemolyticus serotype O3:K6 (strain RIMD 2210633) protein is Large ribosomal subunit protein bL19.